Consider the following 160-residue polypeptide: Cyclic pyranopterin monophosphate synthase (160 aa).

Substrate is bound by residues 75–77 (LCH) and 113–114 (ME). D128 is an active-site residue.

It belongs to the MoaC family. As to quaternary structure, homohexamer; trimer of dimers.

It carries out the reaction (8S)-3',8-cyclo-7,8-dihydroguanosine 5'-triphosphate = cyclic pyranopterin phosphate + diphosphate. It functions in the pathway cofactor biosynthesis; molybdopterin biosynthesis. Its function is as follows. Catalyzes the conversion of (8S)-3',8-cyclo-7,8-dihydroguanosine 5'-triphosphate to cyclic pyranopterin monophosphate (cPMP). This is Cyclic pyranopterin monophosphate synthase from Sodalis glossinidius (strain morsitans).